Consider the following 148-residue polypeptide: Large ribosomal subunit protein uL15 (148 aa).

Residues methionine 1 to valine 47 are disordered. A compositionally biased stretch (basic residues) spans threonine 31–glycine 45.

Belongs to the universal ribosomal protein uL15 family. Part of the 50S ribosomal subunit.

Functionally, binds to the 23S rRNA. The protein is Large ribosomal subunit protein uL15 of Pseudothermotoga lettingae (strain ATCC BAA-301 / DSM 14385 / NBRC 107922 / TMO) (Thermotoga lettingae).